Consider the following 137-residue polypeptide: Large-conductance mechanosensitive channel (137 aa).

2 helical membrane-spanning segments follow: residues 14 to 34 and 81 to 101; these read VLDL…INSL and GSFL…FLIV.

It belongs to the MscL family. Homopentamer.

Its subcellular location is the cell membrane. Functionally, channel that opens in response to stretch forces in the membrane lipid bilayer. May participate in the regulation of osmotic pressure changes within the cell. This chain is Large-conductance mechanosensitive channel, found in Chloroflexus aggregans (strain MD-66 / DSM 9485).